The chain runs to 104 residues: Ig kappa chain b5 variant C region (104 aa).

The 96-residue stretch at proline 5–serine 100 folds into the Ig-like domain. Cysteine 26 and cysteine 85 are oxidised to a cystine.

The polypeptide is Ig kappa chain b5 variant C region (Oryctolagus cuniculus (Rabbit)).